The primary structure comprises 100 residues: Urease subunit gamma (100 aa).

Belongs to the urease gamma subunit family. In terms of assembly, heterotrimer of UreA (gamma), UreB (beta) and UreC (alpha) subunits. Three heterotrimers associate to form the active enzyme.

It localises to the cytoplasm. The enzyme catalyses urea + 2 H2O + H(+) = hydrogencarbonate + 2 NH4(+). It functions in the pathway nitrogen metabolism; urea degradation; CO(2) and NH(3) from urea (urease route): step 1/1. This chain is Urease subunit gamma, found in Polynucleobacter asymbioticus (strain DSM 18221 / CIP 109841 / QLW-P1DMWA-1) (Polynucleobacter necessarius subsp. asymbioticus).